Here is a 345-residue protein sequence, read N- to C-terminus: Fe-S cluster assembly protein DRE2 (345 aa).

The segment at 11 to 166 (FSHSSNGVVL…SIGSSSGSSS (156 aa)) is N-terminal SAM-like domain. The interval 147-166 (SKPATASSSFSIGSSSGSSS) is disordered. Low complexity predominate over residues 153–166 (SSSFSIGSSSGSSS). The interval 167-210 (ALPLRRKLGSGASANAKKSLWATQPASANDLIDEASLLRDADFV) is linker. Residues Cys-220, Cys-233, Cys-236, and Cys-238 each contribute to the [2Fe-2S] cluster site. The fe-S binding site A stretch occupies residues 220-238 (CDVGAGQGKKKKACKGCTC). The [4Fe-4S] cluster site is built by Cys-307, Cys-310, Cys-318, and Cys-321. 2 short sequence motifs (cx2C motif) span residues 307-310 (CGSC) and 318-321 (CSSC). Residues 307–321 (CGSCFLGDAFRCSSC) are fe-S binding site B.

It belongs to the anamorsin family. Monomer. Interacts with TAH18. Interacts with MIA40. [2Fe-2S] cluster is required as a cofactor. The cofactor is [4Fe-4S] cluster.

The protein resides in the cytoplasm. The protein localises to the mitochondrion intermembrane space. In terms of biological role, component of the cytosolic iron-sulfur (Fe-S) protein assembly (CIA) machinery required for the maturation of extramitochondrial Fe-S proteins. Part of an electron transfer chain functioning in an early step of cytosolic Fe-S biogenesis, facilitating the de novo assembly of a [4Fe-4S] cluster on the scaffold complex CFD1-NBP35. Electrons are transferred to DRE2 from NADPH via the FAD- and FMN-containing protein TAH18. TAH18-DRE2 are also required for the assembly of the diferric tyrosyl radical cofactor of ribonucleotide reductase (RNR), probably by providing electrons for reduction during radical cofactor maturation in the catalytic small subunit RNR2. The polypeptide is Fe-S cluster assembly protein DRE2 (Mycosarcoma maydis (Corn smut fungus)).